Consider the following 338-residue polypeptide: Glycerol-3-phosphate dehydrogenase [NAD(P)+] (338 aa).

Positions 14, 15, 35, and 109 each coordinate NADPH. 3 residues coordinate sn-glycerol 3-phosphate: lysine 109, glycine 138, and threonine 140. Alanine 142 is an NADPH binding site. Residues lysine 194, aspartate 247, serine 257, arginine 258, and asparagine 259 each coordinate sn-glycerol 3-phosphate. The active-site Proton acceptor is lysine 194. NADPH is bound at residue arginine 258. NADPH is bound by residues valine 282 and glutamate 284.

Belongs to the NAD-dependent glycerol-3-phosphate dehydrogenase family.

Its subcellular location is the cytoplasm. The enzyme catalyses sn-glycerol 3-phosphate + NAD(+) = dihydroxyacetone phosphate + NADH + H(+). It catalyses the reaction sn-glycerol 3-phosphate + NADP(+) = dihydroxyacetone phosphate + NADPH + H(+). It functions in the pathway membrane lipid metabolism; glycerophospholipid metabolism. Catalyzes the reduction of the glycolytic intermediate dihydroxyacetone phosphate (DHAP) to sn-glycerol 3-phosphate (G3P), the key precursor for phospholipid synthesis. This chain is Glycerol-3-phosphate dehydrogenase [NAD(P)+], found in Shewanella sediminis (strain HAW-EB3).